The following is a 370-amino-acid chain: uncharacterized protein (370 aa).

The next 10 helical transmembrane spans lie at 6–26 (AVVF…CLGN), 49–69 (IGIV…VAPF), 79–99 (SFAN…GEMA), 111–131 (FLGT…LGII), 143–163 (ILIG…CAGF), 167–187 (MIGK…FGLW), 206–226 (MVAI…IVLI), 236–256 (IQTT…TAFI), 307–327 (VAFA…VAGM), and 333–353 (AAMI…AAWM).

It belongs to the EutH family.

The protein localises to the cell membrane. This is an uncharacterized protein from Bacillus subtilis (strain 168).